Here is a 95-residue protein sequence, read N- to C-terminus: Co-chaperonin GroES (95 aa).

It belongs to the GroES chaperonin family. In terms of assembly, heptamer of 7 subunits arranged in a ring. Interacts with the chaperonin GroEL.

It localises to the cytoplasm. In terms of biological role, together with the chaperonin GroEL, plays an essential role in assisting protein folding. The GroEL-GroES system forms a nano-cage that allows encapsulation of the non-native substrate proteins and provides a physical environment optimized to promote and accelerate protein folding. GroES binds to the apical surface of the GroEL ring, thereby capping the opening of the GroEL channel. This Xanthomonas axonopodis pv. citri (strain 306) protein is Co-chaperonin GroES.